The sequence spans 914 residues: MEGPEIKAVEAVIDNGSFGKRTLRFETGRLAQQADGAVAAYLDDDSMILSTTTAGSSPKENYDFFPLTVDVEEKMYAAGKIPGSFFRREGRPSSEAILACRIIDRPLRPLFPHTLRNEVQVVETVLAVNPDDAYDVIALNAASASTMISGLPFEGPVSGVRLALIDGQWVAFPRWSERERAVFEIVVAGRVVENGDVAIAMIEAGAGKNAWHLIYDEGQTKPDEEVVAGGLEAAKPFIKVICEAQDELKKIAAKETKEFQLFPEYTDELYARIDEIAHKDLDEALSIAEKLPRQDRIHEIKEHVREVLADEFTDMDDAEKDKELGNAFKELQRQIVRRRILTEDYRIDGRGLRDIRTLSAEVDIVPRVHGSALFQRGETQILGVTTLNMLKMEQQIDALSGPQSKRYMHNYEMPPYSTGETGRVGSPKRREIGHGALAEKALVPVLPSREEFPYAIRQVSEAIGSNGSTSMGSVCASTLSLLAAGVPLKAPVAGIAMGLVSGDVDGQHIFKTLTDILGAEDAFGDMDFKVAGTSEFITALQLDTKLDGIPADILAAALQQAKEARATILEVINECIDGPAEMSEFAPRIITTSVPVEKIGEVIGPKGKMINQIQEDTGAEIAIEDDGTVFISSEGGEAAKKAKSIIDSIANPHVPEAGETYNGKVVKTTSFGAFVNLTPGTDGLLHISQIRNLANGERIDAVEDVLREGDTVEVIVQGVDDRGKISLAIPGFEDQENNARPSRGDRDDRRGGRGRGDRDDRRGGRGRRSDRDDRDFDDRDDRPRRRRSDDFEDDYDDRPRRRRSDDRDFDRDDRDDDRPRRRRSADRDFDDRDDRDARDSRDDDRPRRRRSADRDDRGDRDDRRGGFRGGRGRGSDRNPRYATDDNYDDYRADREERTERPRRRVRRDFDPFED.

Residues 407 to 427 (YMHNYEMPPYSTGETGRVGSP) form a disordered region. Asp521 and Asp527 together coordinate Mg(2+). Residues 587 to 646 (PRIITTSVPVEKIGEVIGPKGKMINQIQEDTGAEIAIEDDGTVFISSEGGEAAKKAKSII) form the KH domain. An S1 motif domain is found at 658–730 (GETYNGKVVK…DRGKISLAIP (73 aa)). The tract at residues 727-914 (LAIPGFEDQE…VRRDFDPFED (188 aa)) is disordered. Basic and acidic residues-rich tracts occupy residues 742–789 (SRGD…RRSD), 797–865 (DRPR…DRRG), and 873–899 (RGSD…ERTE).

The protein belongs to the polyribonucleotide nucleotidyltransferase family. It depends on Mg(2+) as a cofactor.

The protein localises to the cytoplasm. The enzyme catalyses RNA(n+1) + phosphate = RNA(n) + a ribonucleoside 5'-diphosphate. Functionally, involved in mRNA degradation. Catalyzes the phosphorolysis of single-stranded polyribonucleotides processively in the 3'- to 5'-direction. The chain is Polyribonucleotide nucleotidyltransferase from Bifidobacterium longum subsp. infantis (strain ATCC 15697 / DSM 20088 / JCM 1222 / NCTC 11817 / S12).